A 141-amino-acid polypeptide reads, in one-letter code: Nucleoside diphosphate kinase (141 aa).

6 residues coordinate ATP: Lys11, Phe59, Arg87, Thr93, Arg104, and Asn114. The active-site Pros-phosphohistidine intermediate is His117.

The protein belongs to the NDK family. In terms of assembly, homotetramer. Mg(2+) is required as a cofactor.

It localises to the cytoplasm. The enzyme catalyses a 2'-deoxyribonucleoside 5'-diphosphate + ATP = a 2'-deoxyribonucleoside 5'-triphosphate + ADP. It catalyses the reaction a ribonucleoside 5'-diphosphate + ATP = a ribonucleoside 5'-triphosphate + ADP. In terms of biological role, major role in the synthesis of nucleoside triphosphates other than ATP. The ATP gamma phosphate is transferred to the NDP beta phosphate via a ping-pong mechanism, using a phosphorylated active-site intermediate. The protein is Nucleoside diphosphate kinase of Azoarcus sp. (strain BH72).